Here is a 147-residue protein sequence, read N- to C-terminus: TRAF-interacting protein with FHA domain-containing protein B (147 aa).

The FHA domain occupies 36–108; it reads LLVGRGQNTH…LGTINRISFS (73 aa).

As to quaternary structure, interacts with TIFA. In terms of tissue distribution, expressed at high levels in spleen and at moderate levels in lung, thymus, and small intestine.

Functionally, inhibits TIFA-mediated TRAF6 activation possibly by inducing a conformational change in TIFA. This Mus musculus (Mouse) protein is TRAF-interacting protein with FHA domain-containing protein B.